A 1034-amino-acid polypeptide reads, in one-letter code: Multidrug export protein AcrF (1034 aa).

The Cytoplasmic portion of the chain corresponds to 1 to 9 (MANFFIRRP). A helical transmembrane segment spans residues 10 to 28 (IFAWVLAIILMMAGALAIL). Residues 29-339 (QLPVAQYPTI…TPFVQLSIHE (311 aa)) lie on the Periplasmic side of the membrane. A helical membrane pass occupies residues 340 to 359 (VVKTLFEAIMLVFLVMYLFL). The Cytoplasmic segment spans residues 360-365 (QNMRAT). The helical transmembrane segment at 366-385 (LIPTIAVPVVLLGTFAILAA) threads the bilayer. The Periplasmic segment spans residues 386-391 (FGYSIN). A helical membrane pass occupies residues 392–413 (TLTMFGMVLAIGLLVDDAIVVV). Topologically, residues 414–441 (ENVERVMMEDKLPPKEATEKSMSQIQGA) are cytoplasmic. A helical transmembrane segment spans residues 442–460 (LVGIAMVLSAVFIPMAFFG). Topologically, residues 461-473 (GSTGAIYRQFSIT) are periplasmic. A helical membrane pass occupies residues 474–496 (IVSAMALSVLVALILTPALCATL). Over 497-537 (LKPVSAEHHENKGGFFGWFNTTFDHSVNHYTNSVGKILGST) the chain is Cytoplasmic. The helical transmembrane segment at 538–556 (GRYLLIYALIVAGMVVLFL) threads the bilayer. Over 557–871 (RLPSSFLPEE…SYQERLSGNQ (315 aa)) the chain is Periplasmic. Residues 872-891 (APALVAISFVVVFLCLAALY) form a helical membrane-spanning segment. Residues 892–897 (ESWSIP) are Cytoplasmic-facing. The helical transmembrane segment at 898–917 (VSVMLVVPLGIVGVLLAATL) threads the bilayer. Over 918 to 923 (FNQKND) the chain is Periplasmic. Residues 924–945 (VYFMVGLLTTIGLSAKNAILIV) form a helical membrane-spanning segment. Topologically, residues 946–973 (EFAKDLMEKEGKGVVEATLMAVRMRLRP) are cytoplasmic. A helical membrane pass occupies residues 974–992 (ILMTSLAFILGVLPLAISN). Residues 993–1005 (GAGSGAQNAVGIG) lie on the Periplasmic side of the membrane. The chain crosses the membrane as a helical span at residues 1006 to 1028 (VMGGMVSATLLAIFFVPVFFVVI). Over 1029–1034 (RRCFKG) the chain is Cytoplasmic.

The protein belongs to the resistance-nodulation-cell division (RND) (TC 2.A.6) family. As to quaternary structure, part of the tripartite efflux system AcrEF-TolC, which is composed of an inner membrane transporter, AcrF, a periplasmic membrane fusion protein, AcrE, and an outer membrane component, TolC. The complex forms a large protein conduit and can translocate molecules across both the inner and outer membranes.

The protein resides in the cell inner membrane. Functionally, part of the tripartite efflux system AcrEF-TolC. Involved in the efflux of indole and organic solvents. The protein is Multidrug export protein AcrF (acrF) of Escherichia coli (strain K12).